The sequence spans 207 residues: Outer-membrane lipoprotein LolB (207 aa).

The N-terminal stretch at 1–21 is a signal peptide; that stretch reads MTLPDFRLIRLLPLASLVLTA. Cys22 carries N-palmitoyl cysteine lipidation. Residue Cys22 is the site of S-diacylglycerol cysteine attachment.

The protein belongs to the LolB family. Monomer.

The protein resides in the cell outer membrane. In terms of biological role, plays a critical role in the incorporation of lipoproteins in the outer membrane after they are released by the LolA protein. The sequence is that of Outer-membrane lipoprotein LolB from Salmonella typhi.